Here is a 289-residue protein sequence, read N- to C-terminus: Thymidylate synthase (289 aa).

Residues Arg21 and 150–151 (RR) each bind dUMP. The Nucleophile role is filled by Cys170. DUMP is bound by residues 191–194 (RSAD), Asn202, and 232–234 (HIY). Asp194 lines the (6R)-5,10-methylene-5,6,7,8-tetrahydrofolate pocket. A (6R)-5,10-methylene-5,6,7,8-tetrahydrofolate-binding site is contributed by Ala288.

The protein belongs to the thymidylate synthase family. Bacterial-type ThyA subfamily. As to quaternary structure, homodimer.

Its subcellular location is the cytoplasm. The enzyme catalyses dUMP + (6R)-5,10-methylene-5,6,7,8-tetrahydrofolate = 7,8-dihydrofolate + dTMP. The protein operates within pyrimidine metabolism; dTTP biosynthesis. In terms of biological role, catalyzes the reductive methylation of 2'-deoxyuridine-5'-monophosphate (dUMP) to 2'-deoxythymidine-5'-monophosphate (dTMP) while utilizing 5,10-methylenetetrahydrofolate (mTHF) as the methyl donor and reductant in the reaction, yielding dihydrofolate (DHF) as a by-product. This enzymatic reaction provides an intracellular de novo source of dTMP, an essential precursor for DNA biosynthesis. The polypeptide is Thymidylate synthase (Malacoplasma penetrans (strain HF-2) (Mycoplasma penetrans)).